The primary structure comprises 293 residues: Oxidoreductase clz16 (293 aa).

Belongs to the asaB hydroxylase/desaturase family.

Its pathway is secondary metabolite biosynthesis. Oxidoreductase; part of the gene cluster that mediates the biosynthesis of squalestatin S1 (SQS1, also known as zaragozic acid A), a heavily oxidized fungal polyketide that offers potent cholesterol lowering activity by targeting squalene synthase (SS). SQS1 is composed of a 2,8-dioxobicyclic[3.2.1]octane-3,4,5-tricarboxyclic acid core that is connected to two lipophilic polyketide arms. These initial steps feature the priming of an unusual benzoic acid starter unit onto the highly reducing polyketide synthase clz14, followed by oxaloacetate extension and product release to generate a tricarboxylic acid containing product. The phenylalanine ammonia lyase (PAL) clz10 and the acyl-CoA ligase clz12 are involved in transforming phenylalanine into benzoyl-CoA. The citrate synthase-like protein clz17 is involved in connecting the C-alpha-carbons of the hexaketide chain and oxaloacetate to afford the tricarboxylic acid unit. The potential hydrolytic enzymes, clz11 and clz13, are in close proximity to pks2 and may participate in product release. On the other side, the tetraketide arm is synthesized by a the squalestatin tetraketide synthase clz2 and enzymatically esterified to the core in the last biosynthetic step, by the acetyltransferase clz6. The biosynthesis of the tetraketide must involve 3 rounds of chain extension. After the first and second rounds methyl-transfer occurs, and in all rounds of extension the ketoreductase and dehydratase are active. The enoyl reductase and C-MeT of clz2 are not active in the final round of extension. The acetyltransferase clz6 appears to have a broad substrate selectivity for its acyl CoA substrate, allowing the in vitro synthesis of novel squalestatins. The biosynthesis of SQS1 requires several oxidative steps likely performed by oxidoreductases clz3, clz15 and clz16. Finally, in support of the identification of the cluster as being responsible for SQS1 production, the cluster contains a gene encoding a putative squalene synthase (SS) clz20, suggesting a likely mechanism for self-resistance. The polypeptide is Oxidoreductase clz16 (Cochliobolus lunatus (Filamentous fungus)).